A 122-amino-acid polypeptide reads, in one-letter code: Putative iron-sulfur cluster insertion protein ErpA (122 aa).

Iron-sulfur cluster contacts are provided by Cys50, Cys114, and Cys116.

Belongs to the HesB/IscA family. In terms of assembly, homodimer. Iron-sulfur cluster is required as a cofactor.

In terms of biological role, required for insertion of 4Fe-4S clusters. The protein is Putative iron-sulfur cluster insertion protein ErpA of Cupriavidus metallidurans (strain ATCC 43123 / DSM 2839 / NBRC 102507 / CH34) (Ralstonia metallidurans).